The primary structure comprises 752 residues: Reticulon-1-B (752 aa).

4 disordered regions span residues 1–57 (MAAN…TSTD), 264–319 (EYPG…SEKQ), 334–424 (KAKE…SPSI), and 444–465 (ESCD…SPMM). Positions 264–273 (EYPGNQQGKS) are enriched in polar residues. The segment covering 334–361 (KAKEGTKRFSSETNDEKQSRSFHAEKQD) has biased composition (basic and acidic residues). Residues 363–383 (TVMSTEATSASHYTKASSAES) show a composition bias toward polar residues. Positions 566-752 (AIDLLYWRDV…AKIPGTKQKE (187 aa)) constitute a Reticulon domain. 2 consecutive transmembrane segments (helical) span residues 580-600 (IVFG…VVSV) and 684-704 (VLMW…LLIM).

Isoform A and isoform C are both expressed in the animal hemisphere (presumptive neural ectoderm) of blastula and gastrula stage embryos, and along the anterior neural border, in the panplacodal primordium, and in the dorsolateral side of archenteron roof of late neurula embryos. At the tailbud stage, expression of the isoforms begin to differ. Isoform A localizes to the cranial placodes including the trigeminal placode, lateral line placode, olfactory placode and otic vesicle. Isoform C localizes to the central nervous system, including the spinal cord, prosencephalon, mesencephalon and rhombencephalon, as well as the lateral line placode, otic vesicle and pronephros.

The protein localises to the endoplasmic reticulum membrane. Its subcellular location is the nucleus. Its function is as follows. Inhibits amyloid precursor protein processing, probably by blocking BACE1 activity. This is Reticulon-1-B (rtn1-b) from Xenopus laevis (African clawed frog).